A 157-amino-acid chain; its full sequence is Small ribosomal subunit protein uS7 (157 aa).

The protein belongs to the universal ribosomal protein uS7 family. Part of the 30S ribosomal subunit. Contacts proteins S9 and S11.

One of the primary rRNA binding proteins, it binds directly to 16S rRNA where it nucleates assembly of the head domain of the 30S subunit. Is located at the subunit interface close to the decoding center, probably blocks exit of the E-site tRNA. In Phenylobacterium zucineum (strain HLK1), this protein is Small ribosomal subunit protein uS7.